A 313-amino-acid chain; its full sequence is Epoxide hydrolase 1 (313 aa).

An AB hydrolase-1 domain is found at 25-299; sequence PAVLFLHGFP…AAHFINQEKA (275 aa). The active-site Nucleophile is the aspartate 100. Tyrosine 149 is an an epoxide binding site. Tyrosine 227 acts as the Proton donor in catalysis. Histidine 292 functions as the Proton acceptor in the catalytic mechanism.

Belongs to the AB hydrolase superfamily. Epoxide hydrolase family. Homodimer. In terms of tissue distribution, highly expressed in fruits 15 days after anthesis (15-DAA).

The enzyme catalyses an epoxide + H2O = an ethanediol. It catalyses the reaction (24S)-24,25-epoxycucurbitadienol + H2O = (24R)-24,25-dihydroxycucurbitadienol. Its pathway is secondary metabolite biosynthesis; terpenoid biosynthesis. Functionally, epoxide hydrolase involved in the biosynthesis of cucurbitacin and mogroside tetracyclic triterpene natural products (e.g. siamenoside I and mogrosides IV, V and VI). Cucurbitacins have cytotoxic properties and exhibit deterrent taste as a defense barrier against herbivores. Mogrosides are nonsugar highly oxygenated compounds used as high-intensity zero-calorie sweeteners; they also possess pharmacological properties such as regulating immunity, lowering blood sugar and lipid levels, protecting the liver, and acting as antioxidants and antitumor agents. Catalyzes the hydrolysis of aromatic epoxide-containing substrates, such as the conversion of 24,25-epoxycucurbitadienol to 24,25-dihydroxycucurbitadienol. This is Epoxide hydrolase 1 from Siraitia grosvenorii (Monk's fruit).